The chain runs to 548 residues: 5-epi-aristolochene synthase 1 (548 aa).

Residues D301, D305, D444, T448, and E452 each coordinate Mg(2+). The DDXXD motif motif lies at 301 to 305 (DDTFD).

This sequence belongs to the terpene synthase family. In terms of assembly, monomer. It depends on Mg(2+) as a cofactor. Expressed in roots, but not in shoots.

It localises to the cytoplasm. The enzyme catalyses (2E,6E)-farnesyl diphosphate = (+)-5-epi-aristolochene + diphosphate. Its pathway is secondary metabolite biosynthesis; terpenoid biosynthesis. Functionally, catalyzes the cyclization of trans,trans-farnesyl diphosphate (FPP) to the bicyclic intermediate 5-epi-aristolochene, initial step in the conversion of FPP to the sesquiterpenoid antifungal phytoalexin capsidiol. Produces germacrene A as an enzyme-bound intermediate that is not released by the enzyme, but is further cyclized to produce the bicyclic 5-epi-aristolochene. The chain is 5-epi-aristolochene synthase 1 (EAS) from Nicotiana attenuata (Coyote tobacco).